The following is a 1196-amino-acid chain: DNA-directed RNA polymerase subunit beta (1196 aa).

This sequence belongs to the RNA polymerase beta chain family. In terms of assembly, the RNAP catalytic core consists of 2 alpha, 1 beta, 1 beta' and 1 omega subunit. When a sigma factor is associated with the core the holoenzyme is formed, which can initiate transcription.

It catalyses the reaction RNA(n) + a ribonucleoside 5'-triphosphate = RNA(n+1) + diphosphate. Its function is as follows. DNA-dependent RNA polymerase catalyzes the transcription of DNA into RNA using the four ribonucleoside triphosphates as substrates. In Lactococcus lactis subsp. cremoris (strain MG1363), this protein is DNA-directed RNA polymerase subunit beta.